Here is a 338-residue protein sequence, read N- to C-terminus: Methionine import ATP-binding protein MetN 1 (338 aa).

Positions 2 to 241 constitute an ABC transporter domain; it reads IQLENIEKHY…PNEKLTKDFI (240 aa). 38-45 is an ATP binding site; that stretch reads GYSGAGKS.

The protein belongs to the ABC transporter superfamily. Methionine importer (TC 3.A.1.24) family. As to quaternary structure, the complex is composed of two ATP-binding proteins (MetN), two transmembrane proteins (MetI) and a solute-binding protein (MetQ).

Its subcellular location is the cell membrane. It catalyses the reaction L-methionine(out) + ATP + H2O = L-methionine(in) + ADP + phosphate + H(+). It carries out the reaction D-methionine(out) + ATP + H2O = D-methionine(in) + ADP + phosphate + H(+). Its function is as follows. Part of the ABC transporter complex MetNIQ involved in methionine import. Responsible for energy coupling to the transport system. The polypeptide is Methionine import ATP-binding protein MetN 1 (Oceanobacillus iheyensis (strain DSM 14371 / CIP 107618 / JCM 11309 / KCTC 3954 / HTE831)).